Reading from the N-terminus, the 230-residue chain is uncharacterized protein (230 aa).

Positions 1–16 (MTCVNVCFFLFPPCHR) are cleaved as a signal peptide. A run of 4 helical transmembrane segments spans residues 27-47 (VDLL…IPLI), 118-138 (LFFF…FLFF), 150-170 (FPIL…LSFL), and 172-191 (SLSH…LRVF).

It localises to the cytoplasm. The protein resides in the nucleus membrane. This is an uncharacterized protein from Schizosaccharomyces pombe (strain 972 / ATCC 24843) (Fission yeast).